The primary structure comprises 350 residues: Biotin synthase (350 aa).

Residues 54 to 278 (REIQLSTLLS…TMPQSYVRLS (225 aa)) enclose the Radical SAM core domain. 3 residues coordinate [4Fe-4S] cluster: cysteine 69, cysteine 73, and cysteine 76. The [2Fe-2S] cluster site is built by cysteine 113, cysteine 144, cysteine 204, and arginine 276.

Belongs to the radical SAM superfamily. Biotin synthase family. Homodimer. [4Fe-4S] cluster is required as a cofactor. It depends on [2Fe-2S] cluster as a cofactor.

It carries out the reaction (4R,5S)-dethiobiotin + (sulfur carrier)-SH + 2 reduced [2Fe-2S]-[ferredoxin] + 2 S-adenosyl-L-methionine = (sulfur carrier)-H + biotin + 2 5'-deoxyadenosine + 2 L-methionine + 2 oxidized [2Fe-2S]-[ferredoxin]. It functions in the pathway cofactor biosynthesis; biotin biosynthesis; biotin from 7,8-diaminononanoate: step 2/2. Its function is as follows. Catalyzes the conversion of dethiobiotin (DTB) to biotin by the insertion of a sulfur atom into dethiobiotin via a radical-based mechanism. The chain is Biotin synthase from Neisseria meningitidis serogroup B (strain ATCC BAA-335 / MC58).